Here is a 674-residue protein sequence, read N- to C-terminus: Zinc finger protein 750 (674 aa).

Residues 25-51 (YKCFQCPFTCNEKSHLFNHMKYGLCKN) form a CCHC-type zinc finger. Zn(2+) contacts are provided by cysteine 27, cysteine 30, histidine 43, and cysteine 49. 3 disordered regions span residues 105–125 (EAKENLDLKNEPKSHAEKTTV), 370–466 (LAKN…QSHS), and 594–674 (TSSP…PRVS). Composition is skewed to polar residues over residues 401-411 (SPTNFTQSSQG) and 444-466 (DSQTIISRENSPSFGNDGVQSHS).

Its subcellular location is the nucleus. Its function is as follows. Transcription factor involved in epidermis differentiation. The chain is Zinc finger protein 750 (znf750) from Xenopus laevis (African clawed frog).